We begin with the raw amino-acid sequence, 869 residues long: H(+)/Cl(-) exchange transporter 6 (869 aa).

Residues 1–80 (MAGCRGSLCC…KKGRWYEVVK (80 aa)) lie on the Cytoplasmic side of the membrane. The next 2 membrane-spanning stretches (helical) occupy residues 81-113 (WTVV…FGVV) and 128-150 (LSLL…LVLI). The Selectivity filter part_1 motif lies at 156–160 (GSGIP). S157 is a binding site for chloride. The helical intramembrane region spans 159–166 (IPEIKCYL). Helical transmembrane passes span 176 to 194 (RLRT…VAGG) and 200 to 217 (EGPM…LPQF). Positions 198–202 (GKEGP) match the Selectivity filter part_2 motif. 2 consecutive intramembrane regions (helical) follow at residues 241–253 (FVSA…IAAA) and 257–265 (PIGATLFSL). The next 3 membrane-spanning stretches (helical) occupy residues 277-294 (TWKV…LNFF), 335-364 (GFFV…YRMR), and 371-392 (KLVR…VFVA). 3 N-linked (GlcNAc...) asparagine glycosylation sites follow: N410, N422, and N432. The next 2 membrane-spanning stretches (helical) occupy residues 462–481 (PITL…WTYG) and 487–511 (GLFV…KSYI). Positions 487 to 491 (GLFVP) match the Selectivity filter part_3 motif. A chloride-binding site is contributed by F489. Residues 519 to 533 (GTFSLIGAAALLGGV) constitute an intramembrane region (helical). Residues 534 to 536 (VRM) constitute an intramembrane region (note=Loop between two helices). An intramembrane region (helical) is located at residues 537–548 (TISLTVILIEST). The note=Loop between two helices intramembrane region spans 549-552 (NEIT). The chain crosses the membrane as a helical span at residues 553 to 571 (YGLPIMITLMVAKWTGDFF). Residues 572 to 869 (NKGIYDIHVG…ARLRQHYQTI (298 aa)) lie on the Cytoplasmic side of the membrane. Y576 serves as a coordination point for chloride. In terms of domain architecture, CBS 1 spans 605 to 662 (MEPNLTYVYPHTRIQSLVSILRTTVHHAFPVVTENRGNEKEFMKGNQLISNNIKFKKS). 630–632 (HHA) is an ATP binding site. A disordered region spans residues 668–687 (AGEQRRRSQSMKSYPSSELR). Positions 677-686 (SMKSYPSSEL) are enriched in polar residues. Position 773 is a phosphoserine (S773). The region spanning 807–868 (MNPSPFTVSP…QARLRQHYQT (62 aa)) is the CBS 2 domain. 849-852 (TRHN) provides a ligand contact to ATP.

Belongs to the chloride channel (TC 2.A.49) family. ClC-6/CLCN6 subfamily. Post-translationally, N-glycosylated on several asparagine residues.

It is found in the late endosome membrane. It catalyses the reaction 2 chloride(in) + H(+)(out) = 2 chloride(out) + H(+)(in). Functionally, voltage-gated channel mediating the exchange of chloride ions against protons. Functions as antiporter and contributes to the acidification of the late endosome lumen. The CLC channel family contains both chloride channels and proton-coupled anion transporters that exchange chloride or another anion for protons. The presence of conserved gating glutamate residues is typical for family members that function as antiporters. This is H(+)/Cl(-) exchange transporter 6 (CLCN6) from Oryctolagus cuniculus (Rabbit).